Consider the following 482-residue polypeptide: L-propargylglycine--L-glutamate ligase (482 aa).

The catalysed reaction is L-propargylglycine + L-glutamate + ATP = L-gamma-glutamyl-L-propargylglycine + ADP + phosphate + H(+). It participates in amino-acid metabolism. Its pathway is antibiotic biosynthesis. Involved in the biosynthesis of terminal alkyne-containing amino acids such as L-beta-ethynylserine, that are produced as antibiotics by S.cattleya. Catalyzes the ATP-dependent ligation of L-propargylglycine to L-glutamate to form the dipeptide L-gamma-glutamyl-L-propargylglycine. Is selective for L-propargylglycine over norvaline, allylglycine and the standard proteinogenic amino acids, except L-cysteine which can be used as a substrate to a lesser extent. This Streptantibioticus cattleyicolor (strain ATCC 35852 / DSM 46488 / JCM 4925 / NBRC 14057 / NRRL 8057) (Streptomyces cattleya) protein is L-propargylglycine--L-glutamate ligase.